Here is a 35-residue protein sequence, read N- to C-terminus: Kappa-theraphotoxin-Tb1c (35 aa).

3 cysteine pairs are disulfide-bonded: cysteine 3-cysteine 18, cysteine 10-cysteine 23, and cysteine 17-cysteine 30.

The protein belongs to the neurotoxin 10 (Hwtx-1) family. 59 (Tltx) subfamily. As to quaternary structure, monomer. In terms of tissue distribution, expressed by the venom gland.

It localises to the secreted. Blocks Kv4.2/KCND2 voltage-gated potassium channels probably by shifting the voltage-dependence of channel activation to more depolarized potentials and by binding to the S3-S4 linker region of the voltage sensor domain. The polypeptide is Kappa-theraphotoxin-Tb1c (Theraphosa blondi (Goliath birdeating spider)).